Consider the following 96-residue polypeptide: Large ribosomal subunit protein uL23 (96 aa).

The protein belongs to the universal ribosomal protein uL23 family. Part of the 50S ribosomal subunit. Contacts protein L29, and trigger factor when it is bound to the ribosome.

Its function is as follows. One of the early assembly proteins it binds 23S rRNA. One of the proteins that surrounds the polypeptide exit tunnel on the outside of the ribosome. Forms the main docking site for trigger factor binding to the ribosome. This Solidesulfovibrio magneticus (strain ATCC 700980 / DSM 13731 / RS-1) (Desulfovibrio magneticus) protein is Large ribosomal subunit protein uL23.